Reading from the N-terminus, the 249-residue chain is Ribosomal RNA small subunit methyltransferase J (249 aa).

Residues 101-102, 117-118, and Asp-171 each bind S-adenosyl-L-methionine; these read RD and ER.

The protein belongs to the methyltransferase superfamily. RsmJ family.

The protein resides in the cytoplasm. It catalyses the reaction guanosine(1516) in 16S rRNA + S-adenosyl-L-methionine = N(2)-methylguanosine(1516) in 16S rRNA + S-adenosyl-L-homocysteine + H(+). In terms of biological role, specifically methylates the guanosine in position 1516 of 16S rRNA. The sequence is that of Ribosomal RNA small subunit methyltransferase J from Tolumonas auensis (strain DSM 9187 / NBRC 110442 / TA 4).